The primary structure comprises 324 residues: Putative divalent cation/proton antiporter TMEM165 (324 aa).

A signal peptide spans 1–33 (MAAAAPGNGRASAPRLLLLFLVPLLWAPAAVRA). At 34 to 89 (GPDEDLSHRNKEPPAPAQQLQPQPVAVQGPEPARVEKIFTPAAPVHTNKEDPATQT) the chain is on the lumenal side. The segment covering 35-45 (PDEDLSHRNKE) has biased composition (basic and acidic residues). Residues 35 to 59 (PDEDLSHRNKEPPAPAQQLQPQPVA) form a disordered region. Over residues 50 to 59 (AQQLQPQPVA) the composition is skewed to low complexity. Residues 90 to 110 (NLGFIHAFVAAISVIIVSELG) traverse the membrane as a helical segment. At 111-126 (DKTFFIAAIMAMRYNR) the chain is on the cytoplasmic side. The helical transmembrane segment at 127–147 (LTVLAGAMLALGLMTCLSVLF) threads the bilayer. The Lumenal portion of the chain corresponds to 148–151 (GYAT). A helical transmembrane segment spans residues 152-172 (TVIPRVYTYYVSTVLFAIFGI). Topologically, residues 173-228 (RMLREGLKMSPDEGQEELEEVQAELKKKDEEFQRTKLLNGPGDVETGTSITVPQKK) are cytoplasmic. A coiled-coil region spans residues 184–211 (DEGQEELEEVQAELKKKDEEFQRTKLLN). A helical membrane pass occupies residues 229-249 (WLHFISPIFVQALTLTFLAEW). At 250–267 (GDRSQLTTIVLAAREDPY) the chain is on the lumenal side. A helical transmembrane segment spans residues 268–288 (GVAVGGTVGHCLCTGLAVIGG). Over 289–299 (RMIAQKISVRT) the chain is Cytoplasmic. A helical membrane pass occupies residues 300–320 (VTIIGGIVFLAFAFSALFISP). Topologically, residues 321–324 (DSGF) are lumenal.

The protein belongs to the GDT1 family. In terms of tissue distribution, ubiquitously expressed.

It is found in the golgi apparatus membrane. It catalyses the reaction Ca(2+)(in) + n H(+)(out) = Ca(2+)(out) + n H(+)(in). The enzyme catalyses Mn(2+)(in) + n H(+)(out) = Mn(2+)(out) + n H(+)(in). Functionally, putative divalent cation:proton antiporter that exchanges calcium or manganese ions for protons across the Golgi membrane. Mediates the reversible transport of calcium or manganese to the Golgi lumen driven by the proton gradient and possibly the membrane potential generated by V-ATPase. Provides calcium or manganese cofactors to resident Golgi enzymes and contributes to the maintenance of an acidic luminal Golgi pH required for proper functioning of the secretory pathway. Promotes Ca(2+) storage within the Golgi lumen of the mammary epithelial cells to be then secreted into milk. The transport mechanism and stoichiometry remains to be elucidated. The protein is Putative divalent cation/proton antiporter TMEM165 of Homo sapiens (Human).